The chain runs to 183 residues: MTETTTKKRWYVLQAFSGFEGRVATTLREYIKLHQMEDQFGEVLVPTEEVVENVAGKRRKSERKFFPGYVLVQMEMNDETWHLVRSVPRVMGFIGGTADKPAPISQREADRILNRLQESSEKPRHRKEFQPGEEVRVTEGPFADFNGTVEEVDYEKGRLKVSVSIFGRATPVELEFSQVEKTN.

The region spanning 131-161 (PGEEVRVTEGPFADFNGTVEEVDYEKGRLKV) is the KOW domain.

The protein belongs to the NusG family.

In terms of biological role, participates in transcription elongation, termination and antitermination. The protein is Transcription termination/antitermination protein NusG of Pasteurella multocida (strain Pm70).